The chain runs to 249 residues: NADH-quinone oxidoreductase subunit C (249 aa).

This sequence belongs to the complex I 30 kDa subunit family. As to quaternary structure, NDH-1 is composed of 14 different subunits. Subunits NuoB, C, D, E, F, and G constitute the peripheral sector of the complex.

The protein resides in the cell inner membrane. The catalysed reaction is a quinone + NADH + 5 H(+)(in) = a quinol + NAD(+) + 4 H(+)(out). In terms of biological role, NDH-1 shuttles electrons from NADH, via FMN and iron-sulfur (Fe-S) centers, to quinones in the respiratory chain. The immediate electron acceptor for the enzyme in this species is believed to be ubiquinone. Couples the redox reaction to proton translocation (for every two electrons transferred, four hydrogen ions are translocated across the cytoplasmic membrane), and thus conserves the redox energy in a proton gradient. This chain is NADH-quinone oxidoreductase subunit C, found in Stenotrophomonas maltophilia (strain R551-3).